Here is a 751-residue protein sequence, read N- to C-terminus: uncharacterized protein (751 aa).

A disordered region spans residues 73–169; it reads FGVVHSHTPK…PVLIDDDTGE (97 aa). The segment covering 96–109 has biased composition (low complexity); the sequence is ATSTRRSATAQRAA. The span at 111–120 shows a compositional bias: polar residues; sequence LKSSPVDQWS.

This is an uncharacterized protein from Invertebrate iridescent virus 3 (IIV-3).